The sequence spans 205 residues: Small ribosomal subunit protein uS4 (205 aa).

The segment covering 1–12 (MSKRIQAKHKLD) has biased composition (basic residues). The tract at residues 1–49 (MSKRIQAKHKLDRRMGQNIWGRPKSPVNRREYGPGQHGQRRKGKMSDFG) is disordered. The region spanning 94 to 155 (RRLDAVVYRA…SSRQLEIVIV (62 aa)) is the S4 RNA-binding domain.

This sequence belongs to the universal ribosomal protein uS4 family. In terms of assembly, part of the 30S ribosomal subunit. Contacts protein S5. The interaction surface between S4 and S5 is involved in control of translational fidelity.

Functionally, one of the primary rRNA binding proteins, it binds directly to 16S rRNA where it nucleates assembly of the body of the 30S subunit. In terms of biological role, with S5 and S12 plays an important role in translational accuracy. This is Small ribosomal subunit protein uS4 from Methylobacterium radiotolerans (strain ATCC 27329 / DSM 1819 / JCM 2831 / NBRC 15690 / NCIMB 10815 / 0-1).